Here is a 377-residue protein sequence, read N- to C-terminus: Nitric oxide reductase FlRd-NAD(+) reductase (377 aa).

It belongs to the FAD-dependent oxidoreductase family. Requires FAD as cofactor.

The protein resides in the cytoplasm. The catalysed reaction is 2 reduced [nitric oxide reductase rubredoxin domain] + NAD(+) + H(+) = 2 oxidized [nitric oxide reductase rubredoxin domain] + NADH. Its pathway is nitrogen metabolism; nitric oxide reduction. Its function is as follows. One of at least two accessory proteins for anaerobic nitric oxide (NO) reductase. Reduces the rubredoxin moiety of NO reductase. This Escherichia coli O127:H6 (strain E2348/69 / EPEC) protein is Nitric oxide reductase FlRd-NAD(+) reductase.